Consider the following 302-residue polypeptide: Sulfate adenylyltransferase subunit 2 (302 aa).

Residues 280-302 (RQGRLIDSDQSASMEQKKRQGYF) are disordered.

The protein belongs to the PAPS reductase family. CysD subfamily. In terms of assembly, heterodimer composed of CysD, the smaller subunit, and CysN.

The enzyme catalyses sulfate + ATP + H(+) = adenosine 5'-phosphosulfate + diphosphate. The protein operates within sulfur metabolism; hydrogen sulfide biosynthesis; sulfite from sulfate: step 1/3. Functionally, with CysN forms the ATP sulfurylase (ATPS) that catalyzes the adenylation of sulfate producing adenosine 5'-phosphosulfate (APS) and diphosphate, the first enzymatic step in sulfur assimilation pathway. APS synthesis involves the formation of a high-energy phosphoric-sulfuric acid anhydride bond driven by GTP hydrolysis by CysN coupled to ATP hydrolysis by CysD. The polypeptide is Sulfate adenylyltransferase subunit 2 (Shewanella baltica (strain OS195)).